Here is a 434-residue protein sequence, read N- to C-terminus: Pre-B-cell leukemia transcription factor 3 (434 aa).

Positions S20–G41 are disordered. Residues H32–G41 are compositionally biased toward basic and acidic residues. Positions G41 to D234 constitute a PBC domain. Positions D48–G127 are PBC-A. The PBC-B stretch occupies residues A130 to D234. A DNA-binding region (homeobox; TALE-type) is located at residues A235–I297. The segment covering N326 to S341 has biased composition (low complexity). Disordered stretches follow at residues N326 to D349 and A405 to N434. A compositionally biased stretch (polar residues) spans A405–T422.

The protein belongs to the TALE/PBX homeobox family. As to quaternary structure, interacts with PBXIP1.

It localises to the nucleus. Its function is as follows. Transcriptional activator that binds the sequence 5'-ATCAATCAA-3'. The sequence is that of Pre-B-cell leukemia transcription factor 3 (Pbx3) from Mus musculus (Mouse).